The following is a 349-amino-acid chain: MEGPEVTDGDNVLNLTHLGLENLNLELVSENKRKDVQQLLLPHNRLVVLPPHVNSFTHLHLLDISNNNMAYIGEEILGLTKLKTLLAKNNRLDEFSFPKELGGLRLEVLNLSGNRFEEIPDQFLQIQTLKSLSLGGNRLKSIPAEIENLISLEFLYLGGNFISSIPPELANLPYLSYLVLCDNRIQSVPPQLAQVHSLRSLSLHNLLTYLPREILSLVQLQELSLRGNPLVVRFVRDLTYTPPTLLELAGRTVKSRGIPYCPQELPENLLMYLDLASKCPNPKCGGVYFDCCVRQIKFVDFCGKYRLPLMHYLCSPECSSPCGSTSQSESDSEDEANAAARRMQKVLLG.

LRR repeat units follow at residues 14–34 (NLTH…NKRK), 35–56 (DVQQ…VNSF), 58–80 (HLHL…LGLT), 81–102 (KLKT…KELG), 105–125 (RLEV…QFLQ), 128–149 (TLKS…IENL), 151–173 (SLEF…ANLP), 174–195 (YLSY…LAQV), 197–217 (SLRS…ILSL), and 219–239 (QLQE…RDLT).

The polypeptide is Leucine-rich repeat-containing protein 58 (lrrc58) (Xenopus tropicalis (Western clawed frog)).